The chain runs to 266 residues: UPF0246 protein PHZ_c0561 (266 aa).

Residues 245 to 266 form a disordered region; the sequence is DEEFTFARPQPPPPAASRNKED.

The protein belongs to the UPF0246 family.

The polypeptide is UPF0246 protein PHZ_c0561 (Phenylobacterium zucineum (strain HLK1)).